The sequence spans 550 residues: Phosphomannomutase (550 aa).

The active-site Phosphoserine intermediate is the S148. Residues S148, D300, D302, and D304 each coordinate Mg(2+).

Belongs to the phosphohexose mutase family. The cofactor is Mg(2+).

It carries out the reaction alpha-D-mannose 1-phosphate = D-mannose 6-phosphate. This Mycoplasma genitalium (strain ATCC 33530 / DSM 19775 / NCTC 10195 / G37) (Mycoplasmoides genitalium) protein is Phosphomannomutase (manB).